The following is a 1375-amino-acid chain: DNA-directed RNA polymerase subunit beta (1375 aa).

It belongs to the RNA polymerase beta chain family. As to quaternary structure, the RNAP catalytic core consists of 2 alpha, 1 beta, 1 beta' and 1 omega subunit. When a sigma factor is associated with the core the holoenzyme is formed, which can initiate transcription.

The catalysed reaction is RNA(n) + a ribonucleoside 5'-triphosphate = RNA(n+1) + diphosphate. DNA-dependent RNA polymerase catalyzes the transcription of DNA into RNA using the four ribonucleoside triphosphates as substrates. This is DNA-directed RNA polymerase subunit beta from Methylibium petroleiphilum (strain ATCC BAA-1232 / LMG 22953 / PM1).